Consider the following 442-residue polypeptide: Cell division protein FtsA (442 aa).

Residues 401 to 428 (VTSYDNDSYDAPEETVYDEPEQKKSDED) are disordered. A compositionally biased stretch (acidic residues) spans 407–419 (DSYDAPEETVYDE).

Belongs to the FtsA/MreB family. Self-interacts. Interacts with FtsZ.

It is found in the cell membrane. Functionally, cell division protein that is involved in the assembly of the Z ring. May serve as a membrane anchor for the Z ring. This Enterococcus hirae protein is Cell division protein FtsA.